A 330-amino-acid polypeptide reads, in one-letter code: Beta-ketoacyl-[acyl-carrier-protein] synthase III (330 aa).

Active-site residues include Cys114 and His257. The ACP-binding stretch occupies residues 258 to 262 (QANLR). Residue Asn287 is part of the active site.

The protein belongs to the thiolase-like superfamily. FabH family. Homodimer.

The protein resides in the cytoplasm. It catalyses the reaction malonyl-[ACP] + acetyl-CoA + H(+) = 3-oxobutanoyl-[ACP] + CO2 + CoA. It participates in lipid metabolism; fatty acid biosynthesis. Functionally, catalyzes the condensation reaction of fatty acid synthesis by the addition to an acyl acceptor of two carbons from malonyl-ACP. Catalyzes the first condensation reaction which initiates fatty acid synthesis and may therefore play a role in governing the total rate of fatty acid production. Possesses both acetoacetyl-ACP synthase and acetyl transacylase activities. Its substrate specificity determines the biosynthesis of branched-chain and/or straight-chain of fatty acids. The protein is Beta-ketoacyl-[acyl-carrier-protein] synthase III of Oleidesulfovibrio alaskensis (strain ATCC BAA-1058 / DSM 17464 / G20) (Desulfovibrio alaskensis).